The following is a 601-amino-acid chain: GPI mannosyltransferase 3 (601 aa).

5 helical membrane passes run 66-86 (LIFQ…ELIV), 133-153 (APKL…ILLA), 176-196 (TVIN…FFIT), 243-263 (PTNA…LVLS), and 270-290 (FSLL…NLCI). N-linked (GlcNAc...) asparagine glycosylation is present at asparagine 309. Transmembrane regions (helical) follow at residues 327-347 (VFQS…HSFF), 360-380 (VNPF…YSLI), 387-407 (FIYP…IWLL), and 421-441 (FFSQ…MLLS). The N-linked (GlcNAc...) asparagine glycan is linked to asparagine 521.

It belongs to the glycosyltransferase 22 family. PIGB subfamily.

The protein resides in the endoplasmic reticulum membrane. It functions in the pathway glycolipid biosynthesis; glycosylphosphatidylinositol-anchor biosynthesis. Functionally, mannosyltransferase involved in glycosylphosphatidylinositol-anchor biosynthesis. Transfers the third mannose to Man2-GlcN-acyl-PI during GPI precursor assembly. The chain is GPI mannosyltransferase 3 (GPI10) from Kluyveromyces lactis (strain ATCC 8585 / CBS 2359 / DSM 70799 / NBRC 1267 / NRRL Y-1140 / WM37) (Yeast).